The chain runs to 72 residues: ATP synthase subunit c (72 aa).

A run of 2 helical transmembrane segments spans residues 1-21 (MSLG…GAGI) and 48-68 (MFIG…FSFI).

This sequence belongs to the ATPase C chain family. In terms of assembly, F-type ATPases have 2 components, F(1) - the catalytic core - and F(0) - the membrane proton channel. F(1) has five subunits: alpha(3), beta(3), gamma(1), delta(1), epsilon(1). F(0) has three main subunits: a(1), b(2) and c(10-14). The alpha and beta chains form an alternating ring which encloses part of the gamma chain. F(1) is attached to F(0) by a central stalk formed by the gamma and epsilon chains, while a peripheral stalk is formed by the delta and b chains.

Its subcellular location is the cell membrane. Its function is as follows. F(1)F(0) ATP synthase produces ATP from ADP in the presence of a proton or sodium gradient. F-type ATPases consist of two structural domains, F(1) containing the extramembraneous catalytic core and F(0) containing the membrane proton channel, linked together by a central stalk and a peripheral stalk. During catalysis, ATP synthesis in the catalytic domain of F(1) is coupled via a rotary mechanism of the central stalk subunits to proton translocation. Key component of the F(0) channel; it plays a direct role in translocation across the membrane. A homomeric c-ring of between 10-14 subunits forms the central stalk rotor element with the F(1) delta and epsilon subunits. This is ATP synthase subunit c from Geobacillus kaustophilus (strain HTA426).